Reading from the N-terminus, the 369-residue chain is MFCVAPPELETKMNITKGGLVLFSANSNSSCMELSKKIAERLGVEMGKVQVYQEPNRETRVQIQESVRGKDVFIIQTVSKDVNTTIMELLIMVYACKTSCAKSIIGVIPYFPYSKQCKMRKRGSIVSKLLASMMCKAGLTHLITMDLHQKEIQGFFNIPVDNLRASPFLLQYIQEEIPDYRNAVIVAKSPASAKRAQSFAERLRLGIAVIHGEAQDAESDLVDGRHSPPMVRSVAAIHPSLEIPMLIPKEKPPITVVGDVGGRIAIIVDDIIDDVDSFLAAAETLKERGAYKIFVMATHGLLSSDAPRLIEESAIDEVVVTNTIPHEIQKLQCPKIKTVDISMILSEAIRRIHNGESMSYLFRNIGLDD.

M1 is subject to N-acetylmethionine. S219, S227, and S233 each carry phosphoserine.

The protein belongs to the ribose-phosphate pyrophosphokinase family. Binds to PRPS1 and PRPS2. In terms of tissue distribution, ubiquitous.

In terms of biological role, seems to play a negative regulatory role in 5-phosphoribose 1-diphosphate synthesis. In Rattus norvegicus (Rat), this protein is Phosphoribosyl pyrophosphate synthase-associated protein 2 (Prpsap2).